A 432-amino-acid polypeptide reads, in one-letter code: MAQILAPSVQWQMRFTKNSTEVSSMTSKMWGSLFLKQNKKAPARSSTKYRALAVKSEDGTINRMEDLLNLDVTPYTDKIIAEYIWIGGTGIDVRSKSRTISKPVEHPSELPKWNYDGSSTGQAPGDDSEVILYPQAIFKDPFRGGNNILVICDTYTPQGEPIPTNKRHKAAQIFSDAKVLGEVPWFGIEQEYTLMQQDVNWPLGWNVGGYPGPQGPYYCAAGADKSFGRDISDAHYKACLYAGINISGTNGEVMPGQWEFQVGPSVGIEAGDHIWCARYLLERITEQAGVVLTLDPKPIDGDWNGAGCHTNYSTKSMREEGGFEVIKKAILNLSLRHKEHISAYGEGNERRLTGKHETASIDSFSWGVADRGCSIRVGRDTEKEGKGYLEDRRPASNMDPYVVTGLLAETTLLWEPTLEAEALAAQKLSLNV.

In terms of domain architecture, GS beta-grasp spans 79 to 159; it reads IIAEYIWIGG…VICDTYTPQG (81 aa). The GS catalytic domain maps to 166–432; it reads KRHKAAQIFS…LAAQKLSLNV (267 aa).

Belongs to the glutamine synthetase family. In terms of assembly, homooctamer.

It localises to the plastid. It is found in the chloroplast. The catalysed reaction is L-glutamate + NH4(+) + ATP = L-glutamine + ADP + phosphate + H(+). Functionally, the light-modulated chloroplast enzyme, encoded by a nuclear gene and expressed primarily in leaves, is responsible for the reassimilation of the ammonia generated by photorespiration. The sequence is that of Glutamine synthetase, chloroplastic (GLN2) from Daucus carota (Wild carrot).